A 140-amino-acid chain; its full sequence is MGRVSGLVPSRFLTLLAHLVVVITLFWSRDSNIQACLPLTFTPEEYDKQDIQLVAALSVTLGLFAVELAGFLSGVSMFNSTQSLISIGAHCSASVALSFFIFERWECTTYWYIFVFCSALPAVTEMALFVTVFGLKKKPF.

A run of 2 helical transmembrane segments spans residues 7–27 (LVPSRFLTLLAHLVVVITLFW) and 53–73 (LVAALSVTLGLFAVELAGFLS). Residue asparagine 79 is glycosylated (N-linked (GlcNAc...) asparagine). Transmembrane regions (helical) follow at residues 83–103 (SLISIGAHCSASVALSFFIFE) and 113–133 (IFVFCSALPAVTEMALFVTVF).

As to quaternary structure, part of the tectonic-like complex (also named B9 complex). Interacts with TMEM237, TMEM231, MKS1 and TMEM216.

It localises to the membrane. The protein resides in the cell projection. The protein localises to the cilium. In terms of biological role, plays a role in cilia formation and embryonic patterning. Requires for normal Sonic hedgehog (Shh) signaling in the neural tube and acts in combination with GLI2 and GLI3 to pattern ventral and intermediate neuronal cell types. During ciliogenesis regulates the ciliary transition zone localization of some MKS complex proteins. The polypeptide is Transmembrane protein 107 (Homo sapiens (Human)).